The following is a 1368-amino-acid chain: DNA-directed RNA polymerase subunit beta (1368 aa).

Belongs to the RNA polymerase beta chain family. As to quaternary structure, the RNAP catalytic core consists of 2 alpha, 1 beta, 1 beta' and 1 omega subunit. When a sigma factor is associated with the core the holoenzyme is formed, which can initiate transcription.

The enzyme catalyses RNA(n) + a ribonucleoside 5'-triphosphate = RNA(n+1) + diphosphate. Functionally, DNA-dependent RNA polymerase catalyzes the transcription of DNA into RNA using the four ribonucleoside triphosphates as substrates. In Burkholderia mallei (strain SAVP1), this protein is DNA-directed RNA polymerase subunit beta.